The primary structure comprises 783 residues: Protein involved in starch initiation 1 (783 aa).

The transit peptide at 1 to 27 (MGFSQAIRLNLASFSSPSPCDYCLTRV) directs the protein to the chloroplast. Coiled-coil stretches lie at residues 128–309 (LHDA…LKEE), 345–432 (LVFS…LELA), and 457–512 (LQEK…LKAL).

Interacts with PTST2; the interaction is essential for the initiation of starch granules biosynthesis in leaf chloroplasts. Interacts with SS4; the interaction is essential for the initiation of starch granules biosynthesis in leaf chloroplasts.

It is found in the plastid. Its subcellular location is the chloroplast. Functionally, required for the initiation of starch granules biosynthesis in leaf chloroplasts. Involved in determining starch granule number and size in chloroplasts. The polypeptide is Protein involved in starch initiation 1 (Arabidopsis thaliana (Mouse-ear cress)).